A 211-amino-acid polypeptide reads, in one-letter code: Urease accessory protein UreG (211 aa).

GTP is bound at residue 11–18 (GPVGSGKT).

It belongs to the SIMIBI class G3E GTPase family. UreG subfamily. In terms of assembly, homodimer. UreD, UreF and UreG form a complex that acts as a GTP-hydrolysis-dependent molecular chaperone, activating the urease apoprotein by helping to assemble the nickel containing metallocenter of UreC. The UreE protein probably delivers the nickel.

It localises to the cytoplasm. Functionally, facilitates the functional incorporation of the urease nickel metallocenter. This process requires GTP hydrolysis, probably effectuated by UreG. The protein is Urease accessory protein UreG of Laribacter hongkongensis (strain HLHK9).